A 3788-amino-acid polypeptide reads, in one-letter code: Lysosomal-trafficking regulator (3788 aa).

Disordered stretches follow at residues 148–180 and 198–217; these read KSTH…TVVS and EGHL…VLSD. Position 164 is a phosphoserine (S164). T165 is modified (phosphothreonine). Residue S166 is modified to Phosphoserine. One copy of the WD 1 repeat lies at 662 to 700; that stretch reads GPTSGLPSPSYRFQGILPSSGSEDLLWKWDALEAYQSFV. Disordered regions lie at residues 1169–1196, 1213–1240, and 1482–1519; these read LGPG…FSEE, GYEA…EAEG, and ESAA…TESI. Residues 1213-1232 are compositionally biased toward acidic residues; it reads GYEADSESNPEDVDTQDDGV. Phosphoserine is present on residues S1503 and S1504. A WD 2 repeat occupies 1576–1620; that stretch reads SQENIFFPSKWQHLVLTYIQHPQGKKNVHGEISIWVSGQRKTDVI. Residues S2099, S2118, S2203, S2207, and S2254 each carry the phosphoserine modification. The interval 2177–2221 is disordered; it reads ANGVSRGSPRFPRARVDHKDVGTEPRSDDDSPGDESYPRRPDNLK. The segment covering 2190-2205 has biased composition (basic and acidic residues); it reads ARVDHKDVGTEPRSDD. Disordered stretches follow at residues 2556–2581 and 2659–2681; these read HDSE…SIAG and NTSQ…HHEQ. The segment covering 2566–2578 has biased composition (basic residues); the sequence is SAHRHSVPPKRRS. A compositionally biased stretch (polar residues) spans 2659–2671; that stretch reads NTSQSKTSVSQTE. A BEACH-type PH domain is found at 2996–3102; the sequence is AASESIRVNR…VRDDVYQSIL (107 aa). The region spanning 3126 to 3409 is the BEACH domain; it reads QITNFEYLTH…QLFHTAHASR (284 aa). WD repeat units follow at residues 3550-3589, 3601-3640, 3643-3686, 3687-3731, and 3736-3775; these read SQQH…STPS, GHTE…YVQS, GHKS…VGHV, HCRE…PVRE, and KSNK…RVKL.

In terms of assembly, interacts with CPAP, LIP8 and ZNF521. As to expression, expressed in the heart, lung, liver, spleen, brain and in different immune cell types (purified B and T lymphocytes, bone marrow-derived macrophages and dendritic cells).

It is found in the cytoplasm. Functionally, adapter protein that regulates and/or fission of intracellular vesicles such as lysosomes. Might regulate trafficking of effectors involved in exocytosis. In cytotoxic T-cells and natural killer (NK) cells, has role in the regulation of size, number and exocytosis of lytic granules. In macrophages and dendritic cells, regulates phagosome maturation by controlling the conversion of early phagosomal compartments into late phagosomes. In macrophages and dendritic cells, specifically involved in TLR3- and TLR4-induced production of pro-inflammatory cytokines by regulating the endosomal TLR3- TICAM1/TRIF and TLR4- TICAM1/TRIF signaling pathways. This Mus musculus (Mouse) protein is Lysosomal-trafficking regulator (Lyst).